The chain runs to 166 residues: Ribosome maturation factor RimM (166 aa).

The 73-residue stretch at 91–163 (EDEFYEFQLI…KMQITPPEGW (73 aa)) folds into the PRC barrel domain.

Belongs to the RimM family. Binds ribosomal protein uS19.

Its subcellular location is the cytoplasm. An accessory protein needed during the final step in the assembly of 30S ribosomal subunit, possibly for assembly of the head region. Essential for efficient processing of 16S rRNA. May be needed both before and after RbfA during the maturation of 16S rRNA. It has affinity for free ribosomal 30S subunits but not for 70S ribosomes. The sequence is that of Ribosome maturation factor RimM from Sulfurihydrogenibium sp. (strain YO3AOP1).